Reading from the N-terminus, the 234-residue chain is NLP effector protein 10 (234 aa).

A signal peptide spans 1–17 (MFKTFIIAAVAVATVRA). The N-linked (GlcNAc...) asparagine glycan is linked to asparagine 65. The Conserved undecapeptide motif I motif lies at 101 to 111 (AIMYSWYFPKD). A Hepta-peptide GHRHDWE motif II motif is present at residues 118 to 124 (GHRHDWE).

It belongs to the Necrosis inducing protein (NPP1) family.

The protein resides in the secreted. Secreted effector that contributes moderately to virulence during infection by P.capsici. Does not cause visible reaction of C.annuum for several days after inoculation, but by 7 days after inoculation, small necrotic lesions become visible. Leads only to chlorotic areas, without necrosis at 7 days after non-host N.benthamiana leaves infection. The chain is NLP effector protein 10 from Phytophthora capsici.